The chain runs to 293 residues: Formamidopyrimidine-DNA glycosylase (293 aa).

The active-site Schiff-base intermediate with DNA is P2. The active-site Proton donor is the E3. Catalysis depends on K58, which acts as the Proton donor; for beta-elimination activity. Residues H104, R127, and R170 each coordinate DNA. The FPG-type zinc finger occupies 257-293 (SVYGREGKPCRNPACGGTVERVVQSGRSTFFCASCQT). Residue R283 is the Proton donor; for delta-elimination activity of the active site.

Belongs to the FPG family. Monomer. Requires Zn(2+) as cofactor.

It carries out the reaction Hydrolysis of DNA containing ring-opened 7-methylguanine residues, releasing 2,6-diamino-4-hydroxy-5-(N-methyl)formamidopyrimidine.. It catalyses the reaction 2'-deoxyribonucleotide-(2'-deoxyribose 5'-phosphate)-2'-deoxyribonucleotide-DNA = a 3'-end 2'-deoxyribonucleotide-(2,3-dehydro-2,3-deoxyribose 5'-phosphate)-DNA + a 5'-end 5'-phospho-2'-deoxyribonucleoside-DNA + H(+). Functionally, involved in base excision repair of DNA damaged by oxidation or by mutagenic agents. Acts as a DNA glycosylase that recognizes and removes damaged bases. Has a preference for oxidized purines, such as 7,8-dihydro-8-oxoguanine (8-oxoG). Has AP (apurinic/apyrimidinic) lyase activity and introduces nicks in the DNA strand. Cleaves the DNA backbone by beta-delta elimination to generate a single-strand break at the site of the removed base with both 3'- and 5'-phosphates. The sequence is that of Formamidopyrimidine-DNA glycosylase from Brucella canis (strain ATCC 23365 / NCTC 10854 / RM-666).